A 274-amino-acid chain; its full sequence is Dehydration-responsive element-binding protein 2A (274 aa).

Composition is skewed to basic and acidic residues over residues 1-10 (MERGEGRRGD) and 35-50 (KWWKEQNQKLQEENSS). Positions 1–75 (MERGEGRRGD…KGGPENSNCA (75 aa)) are disordered. The AP2/ERF DNA-binding region spans 75-132 (AYRGVRQRTWGKWVAEIREPNRGRRLWLGSFPTALEAAHAYDEAARAMYGPTARVNFA).

This sequence belongs to the AP2/ERF transcription factor family. ERF subfamily.

The protein localises to the nucleus. Transcriptional activator that binds specifically to the DNA sequence 5'-[AG]CCGAC-3'. Binding to the C-repeat/DRE element mediates high salinity- and dehydration-inducible transcription. This is Dehydration-responsive element-binding protein 2A (DREB2A) from Oryza sativa subsp. indica (Rice).